The following is a 94-amino-acid chain: Large ribosomal subunit protein bL27 (94 aa).

Residues 1-9 (MLKMNLQFF) constitute a propeptide that is removed on maturation.

This sequence belongs to the bacterial ribosomal protein bL27 family. In terms of processing, the N-terminus is cleaved by ribosomal processing cysteine protease Prp.

This is Large ribosomal subunit protein bL27 from Halalkalibacterium halodurans (strain ATCC BAA-125 / DSM 18197 / FERM 7344 / JCM 9153 / C-125) (Bacillus halodurans).